A 182-amino-acid chain; its full sequence is Protein SYM1 (182 aa).

Helical transmembrane passes span 51–70, 98–118, and 135–155; these read TLRPFLYGAVLFSLVGDKWY, LIFAPIGVPLYYTAMALMEGG, and LLANWIVWPAFQLCNFSLVPV.

The protein belongs to the peroxisomal membrane protein PXMP2/4 family.

The protein localises to the mitochondrion inner membrane. May be involved in cellular response to stress. Required to maintain mitochondrial DNA (mtDNA) integrity and stability. This Eremothecium gossypii (strain ATCC 10895 / CBS 109.51 / FGSC 9923 / NRRL Y-1056) (Yeast) protein is Protein SYM1 (SYM1).